The sequence spans 2150 residues: Hybrid signal transduction histidine kinase A (2150 aa).

Positions 1–10 (MELKTFKDLN) are enriched in basic and acidic residues. Disordered regions lie at residues 1-41 (MELK…QQQQ), 68-149 (HIPQ…YYYS), 184-267 (NSSS…HQRR), 286-323 (KNKP…GSLG), 339-359 (TEES…NCGS), 415-505 (NNNN…NSPR), 520-546 (SLTS…GRNG), and 560-733 (KPVV…NGAT). The span at 19–32 (PVINTGDQPNPLRT) shows a compositional bias: polar residues. Residues 68–81 (HIPQQLYQKQQQQQ) are compositionally biased toward low complexity. A compositionally biased stretch (polar residues) spans 82-104 (HSHSYGNHSFIHNVSPTSPSYDI). 2 stretches are compositionally biased toward low complexity: residues 105–145 (NNNN…YNNN) and 184–244 (NSSS…NNNI). The segment covering 289 to 304 (PLSSSTPSTVNTCGAV) has biased composition (polar residues). 3 stretches are compositionally biased toward low complexity: residues 305–318 (NNNS…NNNS), 344–359 (GGNN…NCGS), and 415–447 (NNNN…HNIS). A compositionally biased stretch (polar residues) spans 448 to 468 (PRGSNISPRSNNGGSTTISPR). Composition is skewed to low complexity over residues 469-485 (NISN…NNNI), 520-545 (SLTS…NGRN), and 565-600 (NNGN…INNN). Polar residues predominate over residues 614–628 (SKTNSLQDFETSSMN). Low complexity predominate over residues 657–727 (NSNNTNSNNS…NNNNNNNNNN (71 aa)). A helical membrane pass occupies residues 772-792 (AIILGLFIVGSSISILATLVL). Residues 838–1082 (STSEDQFVPF…NVGGRNWMIA (245 aa)) form the CHASE domain. A helical transmembrane segment spans residues 1098–1118 (PYAIGGVCMLLSALVSFWFAV). Residues 1139–1164 (NRKLAEKALAESQERLELAMEGSEDA) adopt a coiled-coil conformation. Disordered regions lie at residues 1209 to 1228 (LNFK…FNLF) and 1233 to 1252 (VDSS…GGGG). One can recognise a PAS domain in the interval 1235–1317 (SSSPQSITNV…SEIKKTITRE (83 aa)). The PAC domain occupies 1321–1376 (MEIECRMRKKYGGYLYIIMRGKVVSNETSFKDNSLRMAGTLRDMTSRKDMQRLILE). Residues 1393–1620 (TVSHEVRTPL…KFKCIIPFLL (228 aa)) form the Histidine kinase domain. His1396 carries the post-translational modification Phosphohistidine; by autocatalysis. 3 disordered regions span residues 1874-1893 (GGGS…NNNF), 1933-1952 (HGNQ…NNSS), and 1962-2017 (QNNN…DTPV). Low complexity-rich tracts occupy residues 1878–1893 (NTMN…NNNF), 1935–1952 (NQQQ…NNSS), and 1962–2002 (QNNN…TPTL). A Response regulatory domain is found at 2026-2146 (KALIVEDNEL…TLKDALAKWG (121 aa)). The residue at position 2076 (Asp2076) is a 4-aspartylphosphate.

Interacts with SDF-2, an acbA peptide involved in sporulation.

It is found in the cell membrane. The catalysed reaction is ATP + protein L-histidine = ADP + protein N-phospho-L-histidine.. In terms of biological role, acts as a receptor histidine kinase for the cytokinin SDF-2 in a signal transduction pathway that regulates prestalk gene expression and controls terminal differentiation of prespore cells. Binding of SDF-2 to this protein inhibits phosphorelay and induces rapid sporulation. This protein undergoes an ATP-dependent autophosphorylation at a conserved histidine residue in the kinase core, and a phosphoryl group is then transferred to a conserved aspartate residue in the receiver domain. The polypeptide is Hybrid signal transduction histidine kinase A (dhkA) (Dictyostelium discoideum (Social amoeba)).